The chain runs to 367 residues: Transcription factor aptf-2 (367 aa).

Residues 29-49 (VPATKETGPSSSAECSTQPAV) form a disordered region. Residues 36 to 47 (GPSSSAECSTQP) are compositionally biased toward polar residues. The interval 220-354 (AKQKAFPNKV…GVASELRRLT (135 aa)) is H-S-H (helix-span-helix), dimerization.

The protein belongs to the AP-2 family. As to quaternary structure, binds DNA as a dimer.

Its subcellular location is the nucleus. It localises to the cytoplasm. Functionally, sequence-specific DNA-binding protein that interacts with enhancer elements to regulate transcription of selected genes. Required for neuroblast and epidermal morphogenesis, perhaps acting in cooperation with transcription factor aptf-4. The protein is Transcription factor aptf-2 of Caenorhabditis elegans.